The primary structure comprises 221 residues: Very-long-chain (3R)-3-hydroxyacyl-CoA dehydratase PASTICCINO 2A (221 aa).

Topologically, residues 1-11 (MAGVGSAVRRL) are cytoplasmic. Residues 12 to 32 (YLSVYNWAVFFGWAQVLYYAV) traverse the membrane as a helical segment. Topologically, residues 33–51 (TTLLESGHEAVYAAVERPL) are lumenal. A helical membrane pass occupies residues 52-70 (QFAQTAAFLEILHGLVGLV). The Cytoplasmic segment spans residues 71–76 (RSPVSA). The helical transmembrane segment at 77-95 (TLPQIGSRLFLTWGILWSF) threads the bilayer. Topologically, residues 96-100 (PETHS) are lumenal. A helical transmembrane segment spans residues 101-121 (HILVTSLVISWSITEIIRYSF). The Cytoplasmic portion of the chain corresponds to 122–141 (FGMKEAFGFAPSWLLWLRYS). The chain crosses the membrane as a helical span at residues 142 to 165 (TFMVLYPTGISSEVGLIYIALPYM). Residues Tyr147 and Glu154 contribute to the active site. Residues 166–184 (KASEKYCLRMPNKWNFSFD) lie on the Lumenal side of the membrane. The helical transmembrane segment at 185–209 (FFYASILSLAIYVPGSPHMFTYMLA) threads the bilayer. Topologically, residues 210-221 (QRKKALAKAKAA) are cytoplasmic.

It belongs to the very long-chain fatty acids dehydratase HACD family.

Its subcellular location is the endoplasmic reticulum membrane. It carries out the reaction a very-long-chain (3R)-3-hydroxyacyl-CoA = a very-long-chain (2E)-enoyl-CoA + H2O. The protein operates within lipid metabolism; fatty acid biosynthesis. Catalyzes the third of the four reactions of the long-chain fatty acids elongation cycle. This endoplasmic reticulum-bound enzymatic process, allows the addition of two carbons to the chain of long- and very long-chain fatty acids/VLCFAs per cycle. This enzyme catalyzes the dehydration of the 3-hydroxyacyl-CoA intermediate into trans-2,3-enoyl-CoA, within each cycle of fatty acid elongation. Thereby, it participates in the production of VLCFAs of different chain lengths that are involved in multiple biological processes as precursors of membrane lipids and lipid mediators. May be an anti-phosphatase that prevents CDKA-1 dephosphorylation and activation. Involved in the hormonal control of cell division and differentiation. Required for proliferation control of meristematic and non-meristematic cells. Negative regulator of the cell cycle. The chain is Very-long-chain (3R)-3-hydroxyacyl-CoA dehydratase PASTICCINO 2A (PAS2A) from Oryza sativa subsp. japonica (Rice).